The sequence spans 132 residues: Ribosome-binding factor A (132 aa).

This sequence belongs to the RbfA family. As to quaternary structure, monomer. Binds 30S ribosomal subunits, but not 50S ribosomal subunits or 70S ribosomes.

It localises to the cytoplasm. Functionally, one of several proteins that assist in the late maturation steps of the functional core of the 30S ribosomal subunit. Associates with free 30S ribosomal subunits (but not with 30S subunits that are part of 70S ribosomes or polysomes). Required for efficient processing of 16S rRNA. May interact with the 5'-terminal helix region of 16S rRNA. The chain is Ribosome-binding factor A from Edwardsiella ictaluri (strain 93-146).